We begin with the raw amino-acid sequence, 543 residues long: Cytochrome P450 1B1 (543 aa).

Cys-470 is a heme binding site.

The protein belongs to the cytochrome P450 family. The cofactor is heme. In terms of tissue distribution, expressed in heart, brain, lung, skeletal muscle, kidney, spleen, thymus, prostate, testis, ovary, small intestine, colon, and peripheral blood leukocytes. Expressed in retinal endothelial cells and umbilical vein endothelial cells (at protein level).

The protein localises to the endoplasmic reticulum membrane. It is found in the microsome membrane. It localises to the mitochondrion. The enzyme catalyses an organic molecule + reduced [NADPH--hemoprotein reductase] + O2 = an alcohol + oxidized [NADPH--hemoprotein reductase] + H2O + H(+). It carries out the reaction 17beta-estradiol + reduced [NADPH--hemoprotein reductase] + O2 = 2-hydroxy-17beta-estradiol + oxidized [NADPH--hemoprotein reductase] + H2O + H(+). The catalysed reaction is 17beta-estradiol + reduced [NADPH--hemoprotein reductase] + O2 = 4-hydroxy-17beta-estradiol + oxidized [NADPH--hemoprotein reductase] + H2O + H(+). It catalyses the reaction estrone + reduced [NADPH--hemoprotein reductase] + O2 = 2-hydroxyestrone + oxidized [NADPH--hemoprotein reductase] + H2O + H(+). The enzyme catalyses estrone + reduced [NADPH--hemoprotein reductase] + O2 = 4-hydroxyestrone + oxidized [NADPH--hemoprotein reductase] + H2O + H(+). It carries out the reaction testosterone + reduced [NADPH--hemoprotein reductase] + O2 = 6beta,17beta-dihydroxyandrost-4-en-3-one + oxidized [NADPH--hemoprotein reductase] + H2O + H(+). The catalysed reaction is progesterone + reduced [NADPH--hemoprotein reductase] + O2 = 6beta-hydroxyprogesterone + oxidized [NADPH--hemoprotein reductase] + H2O + H(+). It catalyses the reaction progesterone + reduced [NADPH--hemoprotein reductase] + O2 = 16alpha-hydroxyprogesterone + oxidized [NADPH--hemoprotein reductase] + H2O + H(+). The enzyme catalyses all-trans-retinol + reduced [NADPH--hemoprotein reductase] + O2 = all-trans-retinal + oxidized [NADPH--hemoprotein reductase] + 2 H2O + H(+). It carries out the reaction all-trans-retinal + reduced [NADPH--hemoprotein reductase] + O2 = all-trans-retinoate + oxidized [NADPH--hemoprotein reductase] + H2O + 2 H(+). The catalysed reaction is (5Z,8Z,11Z,14Z)-eicosatetraenoate + reduced [NADPH--hemoprotein reductase] + O2 = (8R,9S)-epoxy-(5Z,11Z,14Z)-eicosatrienoate + oxidized [NADPH--hemoprotein reductase] + H2O + H(+). It catalyses the reaction (5Z,8Z,11Z,14Z)-eicosatetraenoate + reduced [NADPH--hemoprotein reductase] + O2 = (11R,12S)-epoxy-(5Z,8Z,14Z)-eicosatrienoate + oxidized [NADPH--hemoprotein reductase] + H2O + H(+). The enzyme catalyses (5Z,8Z,11Z,14Z)-eicosatetraenoate + reduced [NADPH--hemoprotein reductase] + O2 = (11S,12R)-epoxy-(5Z,8Z,14Z)-eicosatrienoate + oxidized [NADPH--hemoprotein reductase] + H2O + H(+). It carries out the reaction (5Z,8Z,11Z,14Z)-eicosatetraenoate + reduced [NADPH--hemoprotein reductase] + O2 = (14R,15S)-epoxy-(5Z,8Z,11Z)-eicosatrienoate + oxidized [NADPH--hemoprotein reductase] + H2O + H(+). The catalysed reaction is (5S)-hydroperoxy-(6E,8Z,11Z,14Z)-eicosatetraenoate = 5-oxo-(6E,8Z,11Z,14Z)-eicosatetraenoate + H2O. It catalyses the reaction (12S)-hydroperoxy-(5Z,8Z,10E,14Z)-eicosatetraenoate = 12-oxo-(5Z,8Z,10E,14Z)-eicosatetraenoate + H2O. The enzyme catalyses (13S)-hydroperoxy-(9Z,11E)-octadecadienoate = 13-oxo-(9Z,11E)-octadecadienoate + H2O. It carries out the reaction (15S)-hydroperoxy-(5Z,8Z,11Z,13E)-eicosatetraenoate = 15-oxo-(5Z,8Z,11Z,13E)-eicosatetraenoate + H2O. It participates in steroid hormone biosynthesis. Its pathway is cofactor metabolism; retinol metabolism. The protein operates within lipid metabolism; arachidonate metabolism. Its activity is regulated as follows. Enzyme activity is increased by liposomes containing anionic phospholipids, phosphatidic acid and cardiolipin. Inhibited by naringenin with an IC(50) of 5 uM. Enzyme activity is increased by cytochrome b5. Its function is as follows. A cytochrome P450 monooxygenase involved in the metabolism of various endogenous substrates, including fatty acids, steroid hormones and vitamins. Mechanistically, uses molecular oxygen inserting one oxygen atom into a substrate, and reducing the second into a water molecule, with two electrons provided by NADPH via cytochrome P450 reductase (NADPH--hemoprotein reductase). Exhibits catalytic activity for the formation of hydroxyestrogens from estrone (E1) and 17beta-estradiol (E2), namely 2- and 4-hydroxy E1 and E2. Displays a predominant hydroxylase activity toward E2 at the C-4 position. Metabolizes testosterone and progesterone to B or D ring hydroxylated metabolites. May act as a major enzyme for all-trans retinoic acid biosynthesis in extrahepatic tissues. Catalyzes two successive oxidative transformation of all-trans retinol to all-trans retinal and then to the active form all-trans retinoic acid. Catalyzes the epoxidation of double bonds of certain PUFA. Converts arachidonic acid toward epoxyeicosatrienoic acid (EpETrE) regioisomers, 8,9-, 11,12-, and 14,15- EpETrE, that function as lipid mediators in the vascular system. Additionally, displays dehydratase activity toward oxygenated eicosanoids hydroperoxyeicosatetraenoates (HpETEs). This activity is independent of cytochrome P450 reductase, NADPH, and O2. Also involved in the oxidative metabolism of xenobiotics, particularly converting polycyclic aromatic hydrocarbons and heterocyclic aryl amines procarcinogens to DNA-damaging products. Plays an important role in retinal vascular development. Under hyperoxic O2 conditions, promotes retinal angiogenesis and capillary morphogenesis, likely by metabolizing the oxygenated products generated during the oxidative stress. Also, contributes to oxidative homeostasis and ultrastructural organization and function of trabecular meshwork tissue through modulation of POSTN expression. The chain is Cytochrome P450 1B1 from Homo sapiens (Human).